The sequence spans 155 residues: S-ribosylhomocysteine lyase (155 aa).

Residues His57, His61, and Cys124 each coordinate Fe cation.

This sequence belongs to the LuxS family. As to quaternary structure, homodimer. The cofactor is Fe cation.

The enzyme catalyses S-(5-deoxy-D-ribos-5-yl)-L-homocysteine = (S)-4,5-dihydroxypentane-2,3-dione + L-homocysteine. In terms of biological role, involved in the synthesis of autoinducer 2 (AI-2) which is secreted by bacteria and is used to communicate both the cell density and the metabolic potential of the environment. The regulation of gene expression in response to changes in cell density is called quorum sensing. Catalyzes the transformation of S-ribosylhomocysteine (RHC) to homocysteine (HC) and 4,5-dihydroxy-2,3-pentadione (DPD). The polypeptide is S-ribosylhomocysteine lyase (Listeria monocytogenes serotype 4a (strain HCC23)).